Here is a 215-residue protein sequence, read N- to C-terminus: uncharacterized protein (215 aa).

Residues 98–119 (AAALAVAVASLCVCTLLLTHIV) traverse the membrane as a helical segment.

The protein localises to the membrane. This is an uncharacterized protein from Treponema pallidum (strain Nichols).